Reading from the N-terminus, the 428-residue chain is Tyrosine--tRNA ligase (428 aa).

Tyrosine 41 contacts L-tyrosine. Residues 46–55 carry the 'HIGH' region motif; sequence PTADSLHLGH. Tyrosine 179 and glutamine 183 together coordinate L-tyrosine. The short motif at 239–243 is the 'KMSKS' region element; it reads KFGKT. Lysine 242 is a binding site for ATP. The region spanning 361 to 418 is the S4 RNA-binding domain; it reads ADLLQALVDSELQPSRGQARKTVASNAVTINGEKQADPEYVFSDSDRLFGRYTLLRRG.

The protein belongs to the class-I aminoacyl-tRNA synthetase family. TyrS type 1 subfamily. In terms of assembly, homodimer.

It localises to the cytoplasm. It catalyses the reaction tRNA(Tyr) + L-tyrosine + ATP = L-tyrosyl-tRNA(Tyr) + AMP + diphosphate + H(+). Functionally, catalyzes the attachment of tyrosine to tRNA(Tyr) in a two-step reaction: tyrosine is first activated by ATP to form Tyr-AMP and then transferred to the acceptor end of tRNA(Tyr). The protein is Tyrosine--tRNA ligase of Klebsiella pneumoniae subsp. pneumoniae (strain ATCC 700721 / MGH 78578).